Here is a 125-residue protein sequence, read N- to C-terminus: Profilin-P (125 aa).

Residue S2 is modified to N-acetylserine.

Belongs to the profilin family. Occurs in many kinds of cells as a complex with monomeric actin in a 1:1 ratio.

Its subcellular location is the cytoplasm. It is found in the cytoskeleton. Functionally, binds to actin and affects the structure of the cytoskeleton. At high concentrations, profilin prevents the polymerization of actin, whereas it enhances it at low concentrations. By binding to PIP2, it inhibits the formation of IP3 and DG. This Physarum polycephalum (Slime mold) protein is Profilin-P (PROP).